Here is a 633-residue protein sequence, read N- to C-terminus: Guanylate-binding protein 6 (633 aa).

The segment at 1–310 (MESGPKMLAP…EAVNSGAVPC (310 aa)) is GTPase domain (Globular). The GB1/RHD3-type G domain occupies 35-277 (SQPVVVVAIV…FSSYIFTHAR (243 aa)). Residues 45-52 (GLYRTGKS), 67-69 (LGS), and 97-101 (DTEGL) each bind GTP.

Belongs to the TRAFAC class dynamin-like GTPase superfamily. GB1/RHD3 GTPase family. GB1 subfamily.

The protein resides in the cytoplasmic vesicle. It carries out the reaction GTP + H2O = GDP + phosphate + H(+). Functionally, interferon (IFN)-inducible GTPase that plays important roles in innate immunity against a diverse range of bacterial, viral and protozoan pathogens, such as bacterial pathogens Listeria monocytogenes and Mycobacterium bovis BCG as well as the protozoan pathogen Toxoplasma gondii. Confers protection to several pathogens, including the bacterial pathogens Listeria monocytogenes and Mycobacterium bovis BCG as well as the protozoan pathogen Toxoplasma gondii. The polypeptide is Guanylate-binding protein 6 (GBP6) (Pongo abelii (Sumatran orangutan)).